A 372-amino-acid chain; its full sequence is 4-hydroxy-3-methylbut-2-en-1-yl diphosphate synthase (flavodoxin) (372 aa).

Cysteine 270, cysteine 273, cysteine 305, and glutamate 312 together coordinate [4Fe-4S] cluster.

It belongs to the IspG family. The cofactor is [4Fe-4S] cluster.

It catalyses the reaction (2E)-4-hydroxy-3-methylbut-2-enyl diphosphate + oxidized [flavodoxin] + H2O + 2 H(+) = 2-C-methyl-D-erythritol 2,4-cyclic diphosphate + reduced [flavodoxin]. It participates in isoprenoid biosynthesis; isopentenyl diphosphate biosynthesis via DXP pathway; isopentenyl diphosphate from 1-deoxy-D-xylulose 5-phosphate: step 5/6. Converts 2C-methyl-D-erythritol 2,4-cyclodiphosphate (ME-2,4cPP) into 1-hydroxy-2-methyl-2-(E)-butenyl 4-diphosphate. This chain is 4-hydroxy-3-methylbut-2-en-1-yl diphosphate synthase (flavodoxin), found in Escherichia coli O8 (strain IAI1).